The primary structure comprises 260 residues: MLIIPAIDIKEGKCVRLTRGDFAQKKIYLDNPCDMAVIWRKQNAKMIHVVDLDAALTGETVNFERIREIVNVLDIPIQVGGGIRSVEAVEKYLDIGVSRVVIGSAAVTNPGLIADLLKKYRPSQIVVGIDAEHGVPKIKGWTESSNMQDYELAGEMKKLGVERIIYTDITRDGMLQGVGYETTKRFAEKAGMKVTASGGATTSDDLHKLRSLEKYGVDSVIIGKALYECNFPCQELWYAYEQGLGIDGEFSTARKKECCS.

The active-site Proton acceptor is Asp-8. Asp-130 serves as the catalytic Proton donor.

Belongs to the HisA/HisF family.

Its subcellular location is the cytoplasm. The enzyme catalyses 1-(5-phospho-beta-D-ribosyl)-5-[(5-phospho-beta-D-ribosylamino)methylideneamino]imidazole-4-carboxamide = 5-[(5-phospho-1-deoxy-D-ribulos-1-ylimino)methylamino]-1-(5-phospho-beta-D-ribosyl)imidazole-4-carboxamide. The protein operates within amino-acid biosynthesis; L-histidine biosynthesis; L-histidine from 5-phospho-alpha-D-ribose 1-diphosphate: step 4/9. This chain is 1-(5-phosphoribosyl)-5-[(5-phosphoribosylamino)methylideneamino] imidazole-4-carboxamide isomerase, found in Chlorobaculum tepidum (strain ATCC 49652 / DSM 12025 / NBRC 103806 / TLS) (Chlorobium tepidum).